A 166-amino-acid polypeptide reads, in one-letter code: PTS system glucose-specific EIIA component (166 aa).

The PTS EIIA type-1 domain occupies 34-138 (DPVFAQKMMG…SVISPIIITN (105 aa)). Zn(2+)-binding residues include His-71 and His-86. His-86 acts as the Tele-phosphohistidine intermediate; for EIIA activity in catalysis. His-86 bears the Phosphohistidine; by HPr mark.

In terms of assembly, heterodimer with glycerol kinase (glpk). The cofactor is Zn(2+).

The protein localises to the cytoplasm. Its function is as follows. The phosphoenolpyruvate-dependent sugar phosphotransferase system (sugar PTS), a major carbohydrate active transport system, catalyzes the phosphorylation of incoming sugar substrates concomitantly with their translocation across the cell membrane. The enzyme II complex composed of PtsG and Crr is involved in glucose transport. This is PTS system glucose-specific EIIA component (crr) from Staphylococcus aureus (strain MSSA476).